A 393-amino-acid polypeptide reads, in one-letter code: Argininosuccinate synthase (393 aa).

ATP contacts are provided by residues 7-15 and alanine 34; that span reads AYSGGLDTS. 2 residues coordinate L-citrulline: tyrosine 85 and serine 90. Glycine 115 contacts ATP. Positions 117, 121, and 122 each coordinate L-aspartate. Asparagine 121 serves as a coordination point for L-citrulline. Arginine 125, serine 176, serine 185, glutamate 261, and tyrosine 273 together coordinate L-citrulline.

It belongs to the argininosuccinate synthase family. Type 1 subfamily. As to quaternary structure, homotetramer.

It is found in the cytoplasm. The enzyme catalyses L-citrulline + L-aspartate + ATP = 2-(N(omega)-L-arginino)succinate + AMP + diphosphate + H(+). The protein operates within amino-acid biosynthesis; L-arginine biosynthesis; L-arginine from L-ornithine and carbamoyl phosphate: step 2/3. This is Argininosuccinate synthase from Ehrlichia chaffeensis (strain ATCC CRL-10679 / Arkansas).